We begin with the raw amino-acid sequence, 346 residues long: UPF0053 protein sll1254 (346 aa).

The next 4 helical transmembrane spans lie at 1–21, 58–78, 87–107, and 121–141; these read MLEIVAAIFIVLLGSGICSCA, IGTIVVLNNIFNIVGSITIGA, AWMGVFSGILTLLIIVFGEII, and LLIAIPVRFLTLIFTPLVWLI. The CNNM transmembrane domain maps to 1–179; that stretch reads MLEIVAAIFI…YKEGVIEGDE (179 aa). CBS domains follow at residues 198-259 and 263-320; these read MTPR…GYKT and LARP…IVDE.

It belongs to the UPF0053 family.

It is found in the cell membrane. The chain is UPF0053 protein sll1254 from Synechocystis sp. (strain ATCC 27184 / PCC 6803 / Kazusa).